The sequence spans 359 residues: Peptide chain release factor 1 (359 aa).

Gln-235 carries the N5-methylglutamine modification.

Belongs to the prokaryotic/mitochondrial release factor family. Post-translationally, methylated by PrmC. Methylation increases the termination efficiency of RF1.

It localises to the cytoplasm. Peptide chain release factor 1 directs the termination of translation in response to the peptide chain termination codons UAG and UAA. The chain is Peptide chain release factor 1 from Aromatoleum aromaticum (strain DSM 19018 / LMG 30748 / EbN1) (Azoarcus sp. (strain EbN1)).